The chain runs to 87 residues: Protein moa-2 (87 aa).

Positions 23 to 87 (GTAMRHEPSR…VWTASREESS (65 aa)) are disordered. 2 stretches are compositionally biased toward basic and acidic residues: residues 26–39 (MRHEPSRMDCESAP) and 50–63 (RNEHVYCRCGEREP).

The polypeptide is Protein moa-2 (Caenorhabditis elegans).